A 369-amino-acid chain; its full sequence is 4-hydroxy-3-methylbut-2-en-1-yl diphosphate synthase (flavodoxin) (369 aa).

Residues Cys270, Cys273, Cys305, and Glu312 each contribute to the [4Fe-4S] cluster site.

The protein belongs to the IspG family. The cofactor is [4Fe-4S] cluster.

The enzyme catalyses (2E)-4-hydroxy-3-methylbut-2-enyl diphosphate + oxidized [flavodoxin] + H2O + 2 H(+) = 2-C-methyl-D-erythritol 2,4-cyclic diphosphate + reduced [flavodoxin]. It functions in the pathway isoprenoid biosynthesis; isopentenyl diphosphate biosynthesis via DXP pathway; isopentenyl diphosphate from 1-deoxy-D-xylulose 5-phosphate: step 5/6. Converts 2C-methyl-D-erythritol 2,4-cyclodiphosphate (ME-2,4cPP) into 1-hydroxy-2-methyl-2-(E)-butenyl 4-diphosphate. This chain is 4-hydroxy-3-methylbut-2-en-1-yl diphosphate synthase (flavodoxin), found in Pseudomonas entomophila (strain L48).